The following is a 275-amino-acid chain: 3-methyl-2-oxobutanoate hydroxymethyltransferase (275 aa).

Residues Asp-49 and Asp-88 each contribute to the Mg(2+) site. Residues 49 to 50 (DS), Asp-88, and Lys-118 contribute to the 3-methyl-2-oxobutanoate site. Glu-120 provides a ligand contact to Mg(2+). Residue Glu-187 is the Proton acceptor of the active site.

This sequence belongs to the PanB family. In terms of assembly, homodecamer; pentamer of dimers. Mg(2+) is required as a cofactor.

It localises to the cytoplasm. The catalysed reaction is 3-methyl-2-oxobutanoate + (6R)-5,10-methylene-5,6,7,8-tetrahydrofolate + H2O = 2-dehydropantoate + (6S)-5,6,7,8-tetrahydrofolate. It functions in the pathway cofactor biosynthesis; (R)-pantothenate biosynthesis; (R)-pantoate from 3-methyl-2-oxobutanoate: step 1/2. In terms of biological role, catalyzes the reversible reaction in which hydroxymethyl group from 5,10-methylenetetrahydrofolate is transferred onto alpha-ketoisovalerate to form ketopantoate. The polypeptide is 3-methyl-2-oxobutanoate hydroxymethyltransferase (Brucella melitensis biotype 1 (strain ATCC 23456 / CCUG 17765 / NCTC 10094 / 16M)).